Consider the following 286-residue polypeptide: Eukaryotic translation initiation factor 3 subunit J (286 aa).

3 disordered regions span residues Met1 to Asp35, Ala141 to Phe162, and Lys229 to Thr258. Residues Trp21–Asp35 show a composition bias toward acidic residues. The stretch at Asp35 to Lys75 forms a coiled coil.

Belongs to the eIF-3 subunit J family. As to quaternary structure, component of the eukaryotic translation initiation factor 3 (eIF-3) complex.

The protein resides in the cytoplasm. In terms of biological role, component of the eukaryotic translation initiation factor 3 (eIF-3) complex, which is involved in protein synthesis of a specialized repertoire of mRNAs and, together with other initiation factors, stimulates binding of mRNA and methionyl-tRNAi to the 40S ribosome. The eIF-3 complex specifically targets and initiates translation of a subset of mRNAs involved in cell proliferation. The protein is Eukaryotic translation initiation factor 3 subunit J of Debaryomyces hansenii (strain ATCC 36239 / CBS 767 / BCRC 21394 / JCM 1990 / NBRC 0083 / IGC 2968) (Yeast).